A 385-amino-acid chain; its full sequence is ATP phosphoribosyltransferase regulatory subunit (385 aa).

This sequence belongs to the class-II aminoacyl-tRNA synthetase family. HisZ subfamily. Heteromultimer composed of HisG and HisZ subunits.

The protein localises to the cytoplasm. The protein operates within amino-acid biosynthesis; L-histidine biosynthesis; L-histidine from 5-phospho-alpha-D-ribose 1-diphosphate: step 1/9. Functionally, required for the first step of histidine biosynthesis. May allow the feedback regulation of ATP phosphoribosyltransferase activity by histidine. The chain is ATP phosphoribosyltransferase regulatory subunit from Bordetella pertussis (strain Tohama I / ATCC BAA-589 / NCTC 13251).